Here is a 262-residue protein sequence, read N- to C-terminus: Co-chaperone protein DjlA (262 aa).

The Periplasmic portion of the chain corresponds to 1–6 (MRFWGK). A helical membrane pass occupies residues 7-30 (FFGFVIGFMFGRFFGALLGLWLGH). The Cytoplasmic segment spans residues 31-262 (LYDKRPGGGA…DRVKSERGMR (232 aa)). The J domain occupies 196-262 (DAYHLLGITA…DRVKSERGMR (67 aa)).

Homodimer.

The protein localises to the cell inner membrane. Regulatory DnaK co-chaperone. Direct interaction between DnaK and DjlA is needed for the induction of the wcaABCDE operon, involved in the synthesis of a colanic acid polysaccharide capsule, possibly through activation of the RcsB/RcsC phosphotransfer signaling pathway. The colanic acid capsule may help the bacterium survive conditions outside the host. The sequence is that of Co-chaperone protein DjlA from Shewanella oneidensis (strain ATCC 700550 / JCM 31522 / CIP 106686 / LMG 19005 / NCIMB 14063 / MR-1).